A 58-amino-acid chain; its full sequence is Small ribosomal subunit protein bS21 (58 aa).

The interval K25–I58 is disordered. Residues E31–S42 are compositionally biased toward basic and acidic residues. Basic residues predominate over residues V43 to I58.

It belongs to the bacterial ribosomal protein bS21 family.

This chain is Small ribosomal subunit protein bS21, found in Streptococcus thermophilus (strain ATCC BAA-491 / LMD-9).